The primary structure comprises 359 residues: 4-galactosyl-N-acetylglucosaminide 3-alpha-L-fucosyltransferase FUT6 (359 aa).

Over 1–14 (MDPLGPAKTQWSWR) the chain is Cytoplasmic. Residues 15 to 34 (CCLTALLFQLLVAVCFFSYL) traverse the membrane as a helical; Signal-anchor for type II membrane protein segment. The Lumenal portion of the chain corresponds to 35 to 359 (RVSRDDPTVY…QTRSIAAWFT (325 aa)). The determines site-specific fucosylation stretch occupies residues 73–112 (KPIALPRCSEMVPGTADCNITADRKVYPQADAVIVHHREV). Asparagine 91, asparagine 153, and asparagine 184 each carry an N-linked (GlcNAc...) asparagine glycan.

Belongs to the glycosyltransferase 10 family. As to quaternary structure, homodimer and monomer. Monomer (secreted form). In terms of processing, N-glycosylated. Post-translationally, proteolytic cleavage releases a secreted glycoform of 43 kDa.

The protein resides in the golgi apparatus. It localises to the golgi stack membrane. Its subcellular location is the secreted. It carries out the reaction a beta-D-galactosyl-(1-&gt;4)-N-acetyl-beta-D-glucosaminyl derivative + GDP-beta-L-fucose = a beta-D-galactosyl-(1-&gt;4)-[alpha-L-fucosyl-(1-&gt;3)]-N-acetyl-beta-D-glucosaminyl derivative + GDP + H(+). The catalysed reaction is an N-acetyl-alpha-neuraminyl-(2-&gt;3)-beta-D-galactosyl-(1-&gt;4)-N-acetyl-beta-D-glucosaminyl derivative + GDP-beta-L-fucose = an alpha-Neu5Ac-(2-&gt;3)-beta-D-Gal-(1-&gt;4)-[alpha-L-Fuc-(1-&gt;3)]-beta-D-GlcNAc derivative + GDP + H(+). The enzyme catalyses an alpha-Neu5Ac-(2-&gt;3)-beta-D-Gal-(1-&gt;4)-beta-D-GlcNAc-(1-&gt;3)-beta-D-Gal-(1-&gt;4)-[alpha-L-Fuc-(1-&gt;3)]-beta-D-GlcNAc derivative + GDP-beta-L-fucose = an alpha-Neu5Ac-(2-&gt;3)-beta-D-Gal-(1-&gt;4)-[alpha-L-Fuc-(1-&gt;3)]-beta-D-GlcNAc-(1-&gt;3)-beta-D-Gal-(1-&gt;4)-[alpha-L-Fuc-(1-&gt;3)]-beta-D-GlcNAc derivative + GDP + H(+). It catalyses the reaction a neolactoside nLc6Cer + GDP-beta-L-fucose = beta-D-Gal-(1-&gt;4)-[alpha-L-Fuc-(1-&gt;3)]-beta-D-GlcNAc-(1-&gt;3)-beta-D-Gal-(1-&gt;4)-beta-D-GlcNAc-(1-&gt;3)-beta-D-Gal-(1-&gt;4)-beta-D-Glc-(1&lt;-&gt;1')-Cer + GDP + H(+). It carries out the reaction a neolactoside nLc6Cer + GDP-beta-L-fucose = beta-D-galactosyl-(1-&gt;4)-N-acetyl-beta-D-glucosaminyl-(1-&gt;3)-beta-D-galactosyl-(1-&gt;4)-[alpha-L-fucosyl-(1-&gt;3)]-N-acetyl-beta-D-glucosaminyl-(1-&gt;3)-beta-D-galactosyl-(1-&gt;4)-beta-D-glucosyl-(1&lt;-&gt;1')-ceramide + GDP + H(+). The catalysed reaction is a neolactoside VI(3)-alpha-NeuNAc-nLc6Cer + GDP-beta-L-fucose = a neolactoside VI(3)-alpha-NeuAc,V(3)-alphaFuc-nLc6Cer + GDP + H(+). The enzyme catalyses beta-D-galactosyl-(1-&gt;4)-N-acetyl-D-glucosamine + GDP-beta-L-fucose = beta-D-galactosyl-(1-&gt;4)-[alpha-L-fucosyl-(1-&gt;3)]-N-acetyl-D-glucosamine + GDP + H(+). It catalyses the reaction N-acetyl-alpha-neuraminosyl-(2-&gt;3)-beta-D-galactosyl-(1-&gt;4)-N-acetyl-beta-D-glucosamine + GDP-beta-L-fucose = N-acetyl-alpha-neuraminosyl-(2-&gt;3)-beta-D-galactosyl-(1-&gt;4)-[alpha-L-fucosyl-(1-&gt;3)]-N-acetyl-beta-D-glucosamine + GDP + H(+). It carries out the reaction lactose + GDP-beta-L-fucose = beta-D-galactosyl-(1-&gt;4)-[alpha-L-fucosyl-(1-&gt;3)]-D-glucose + GDP + H(+). The catalysed reaction is alpha-L-Fuc-(1-&gt;2)-beta-D-Gal-(1-&gt;4)-D-Glc + GDP-beta-L-fucose = alpha-L-Fuc-(1-&gt;2)-beta-D-Gal-(1-&gt;4)-[alpha-L-Fuc-(1-&gt;3)]-D-Glc + GDP + H(+). The enzyme catalyses a beta-D-galactosyl-(1-&gt;4)-N-acetyl-beta-D-6-sulfooxy-glucosaminyl derivative + GDP-beta-L-fucose = a beta-D-galactosyl-(1-&gt;4)-[alpha-L-fucosyl-(1-&gt;3)]-N-acetyl-beta-D-6-sulfooxy-glucosaminyl derivative + GDP + H(+). It participates in protein modification; protein glycosylation. In terms of biological role, catalyzes the transfer of L-fucose, from a guanosine diphosphate-beta-L-fucose, to the N-acetyl glucosamine (GlcNAc) of a distal alpha2,3 sialylated lactosamine unit of a glycoprotein- or glycolipid-linked sialopolylactosamines chain or of a distal or internal lactosamine unit of a neutral glycoprotein- or glycolipid-linked polylactosamines chain through an alpha-1,3 glycosidic linkage and participates in surface expression of the sialyl Lewis X (sLe(x)), Lewis X (Le(x)) and non sialylated VIM2 determinants. Moreover transfers fucose to H-type 2 (Fucalpha1-2Galbeta1-4GlcNAc) chain acceptor substrates and participates in difucosylated sialyl Lewis x determinants. Also fucosylates a polylactosamine substrate having a 6 sulfate modification at the GlcNAc moiety and gives rise to sialyl and non-sialyl 6-sulfo lewis X. Does not have activity towards type 1 ((Galbeta1-3GlcNAc)) and H-type 1 chain (Fucalpha1-2Galbeta1-3GlcNAc) acceptors substrates. The chain is 4-galactosyl-N-acetylglucosaminide 3-alpha-L-fucosyltransferase FUT6 from Pongo pygmaeus (Bornean orangutan).